A 484-amino-acid chain; its full sequence is MKFKQDFFTQLPEFYSQVYPQGITKPEWLAWSDDAAQLIGLSQPTDELLLGLSGNAAVDGATYYAQVYSGHQFGGYTPRLGDGRSIILGEAIGPNGAWDVALKGGGPTPYSRRGDGRAVMRSAVREFLVSEALHHLHVPTTRALAVIGSDLPVWRESQETAAITVRLARSHIRFGHFEFFCHSERGRADKLIQLLNFTITQHYPHLSCDAAGYKAWFLQVVQDTAKMIAHWQAVGFAHGVMNTDNMSILGDSFDFGPFAFLDTFQEDFICNHSDPEGRYAFGQQPGVGLWNLQRLAQALTPVIPSDDLIAILNQYQEALVQTYLRLMRAKLGLSAVDVPSVEQDKQDLDLIGRFTVLMEKNQLDYTQTWRQLGKLDPTSKHSALRDDFIDVSQFDAWYQSYQQRLGAVADIPTWQTERNSVNPKYILRNYLAQEAIIAVEEGNLAPLHLLQKILTQPFAEHAEHEDLAKRPPDWGQGLIMSCSS.

ATP is bound by residues Gly81, Gly83, Arg84, Lys103, Asp115, Gly116, Arg166, and Arg173. Catalysis depends on Asp244, which acts as the Proton acceptor. Positions 245 and 254 each coordinate Mg(2+). Asp254 lines the ATP pocket.

Belongs to the SELO family. It depends on Mg(2+) as a cofactor. Mn(2+) serves as cofactor.

The catalysed reaction is L-seryl-[protein] + ATP = 3-O-(5'-adenylyl)-L-seryl-[protein] + diphosphate. The enzyme catalyses L-threonyl-[protein] + ATP = 3-O-(5'-adenylyl)-L-threonyl-[protein] + diphosphate. It catalyses the reaction L-tyrosyl-[protein] + ATP = O-(5'-adenylyl)-L-tyrosyl-[protein] + diphosphate. It carries out the reaction L-histidyl-[protein] + UTP = N(tele)-(5'-uridylyl)-L-histidyl-[protein] + diphosphate. The catalysed reaction is L-seryl-[protein] + UTP = O-(5'-uridylyl)-L-seryl-[protein] + diphosphate. The enzyme catalyses L-tyrosyl-[protein] + UTP = O-(5'-uridylyl)-L-tyrosyl-[protein] + diphosphate. Functionally, nucleotidyltransferase involved in the post-translational modification of proteins. It can catalyze the addition of adenosine monophosphate (AMP) or uridine monophosphate (UMP) to a protein, resulting in modifications known as AMPylation and UMPylation. In Shewanella baltica (strain OS185), this protein is Protein nucleotidyltransferase YdiU.